Here is a 496-residue protein sequence, read N- to C-terminus: Glycogen synthase (496 aa).

Residue Lys24 participates in ADP-alpha-D-glucose binding.

Belongs to the glycosyltransferase 1 family. Bacterial/plant glycogen synthase subfamily.

It catalyses the reaction [(1-&gt;4)-alpha-D-glucosyl](n) + ADP-alpha-D-glucose = [(1-&gt;4)-alpha-D-glucosyl](n+1) + ADP + H(+). The protein operates within glycan biosynthesis; glycogen biosynthesis. Functionally, synthesizes alpha-1,4-glucan chains using ADP-glucose. The polypeptide is Glycogen synthase (Nitrosospira multiformis (strain ATCC 25196 / NCIMB 11849 / C 71)).